The sequence spans 445 residues: UNC93-like protein MFSD11 (445 aa).

The helical transmembrane segment at 8-28 (LLNIVILGVGFMFMFTAFQTS) threads the bilayer. N40 carries N-linked (GlcNAc...) asparagine glycosylation. Helical transmembrane passes span 52 to 72 (LAIIYSVFSASNLIAPSVIAV), 74 to 94 (GCQMSMFLSGLLYSAYIAMFI), 98 to 118 (TWSFYTLSVLIGIAAAVLWTA), and 138 to 158 (IFWALLQFSMLFGNLYIYLAW). N163 is a glycosylation site (N-linked (GlcNAc...) asparagine). Helical transmembrane passes span 170 to 190 (RTVFIALTVISLVGSVLFFLI), 239 to 259 (MLLLSILVAYTGLELTFYSGV), 277 to 297 (LIGLSGIFVGLGEVLGGGLFG), 309 to 329 (PVVILGVVVHFLAFYMIYLYM), 343 to 363 (LSAFINPSKTLALACSFLLGL), 385 to 405 (APAFAVFKFVQSVSAAVAFFY), and 415 to 435 (LLILVIFGFFGTISFFFVEWG).

It belongs to the unc-93 family.

It is found in the membrane. The polypeptide is UNC93-like protein MFSD11 (mfsd11) (Xenopus laevis (African clawed frog)).